The sequence spans 484 residues: tRNA sulfurtransferase (484 aa).

In terms of domain architecture, THUMP spans 63–167 (KEMGERLTCM…DKRLFVIHSQ (105 aa)). ATP is bound by residues 185–186 (LM), Lys-267, Gly-289, and Gln-298. A disulfide bridge links Cys-346 with Cys-457. In terms of domain architecture, Rhodanese spans 405–483 (ALAGQIVIDI…GHANVRVYRP (79 aa)). Cys-457 acts as the Cysteine persulfide intermediate in catalysis.

This sequence belongs to the ThiI family.

It is found in the cytoplasm. It catalyses the reaction [ThiI sulfur-carrier protein]-S-sulfanyl-L-cysteine + a uridine in tRNA + 2 reduced [2Fe-2S]-[ferredoxin] + ATP + H(+) = [ThiI sulfur-carrier protein]-L-cysteine + a 4-thiouridine in tRNA + 2 oxidized [2Fe-2S]-[ferredoxin] + AMP + diphosphate. It carries out the reaction [ThiS sulfur-carrier protein]-C-terminal Gly-Gly-AMP + S-sulfanyl-L-cysteinyl-[cysteine desulfurase] + AH2 = [ThiS sulfur-carrier protein]-C-terminal-Gly-aminoethanethioate + L-cysteinyl-[cysteine desulfurase] + A + AMP + 2 H(+). It participates in cofactor biosynthesis; thiamine diphosphate biosynthesis. In terms of biological role, catalyzes the ATP-dependent transfer of a sulfur to tRNA to produce 4-thiouridine in position 8 of tRNAs, which functions as a near-UV photosensor. Also catalyzes the transfer of sulfur to the sulfur carrier protein ThiS, forming ThiS-thiocarboxylate. This is a step in the synthesis of thiazole, in the thiamine biosynthesis pathway. The sulfur is donated as persulfide by IscS. This Pseudomonas fluorescens (strain Pf0-1) protein is tRNA sulfurtransferase.